The sequence spans 228 residues: Lipoprotein LpqN (228 aa).

The first 19 residues, 1–19 (MKHFTAAVATVALSLALAG), serve as a signal peptide directing secretion. A lipid anchor (N-palmitoyl cysteine) is attached at C20. The S-diacylglycerol cysteine moiety is linked to residue C20. Positions 26–53 (TDSAPTTSPTTTSPTTSTTTTSATTSAQ) are disordered. A compositionally biased stretch (low complexity) spans 28–52 (SAPTTSPTTTSPTTSTTTTSATTSA).

In terms of assembly, interacts with the periplasmic loop domains of the mycolate transporters MmpL3 and MmpL11. Also interacts with secreted cell envelope biosynthetic enzymes such as Ag85A. These interactions are weak and may require a putative mycobacterial adapter protein or molecule. Interacts with human ubiquitin ligase CBL.

The protein resides in the cell membrane. The protein localises to the secreted. Its function is as follows. Involved in cell envelope biogenesis. May act as a membrane fusion protein, connecting MmpL transporters with periplasmic proteins, and play a role in cell envelope lipid changes during biofilm maturation. In terms of biological role, is also a virulence factor required for intracellular survival. Associates with CBL, a host ubiquitin ligase, and probably blocks the normal functions of CBL and disturbs CBL-mediated antibacterial activity. Interaction counteracts antibacterial defense but causes a reciprocal enhancement of antiviral defense. The polypeptide is Lipoprotein LpqN (Mycobacterium tuberculosis (strain ATCC 25618 / H37Rv)).